We begin with the raw amino-acid sequence, 340 residues long: Anthranilate phosphoribosyltransferase (340 aa).

Residues G83, 86 to 87, T91, 93 to 96, 111 to 119, and S123 each bind 5-phospho-alpha-D-ribose 1-diphosphate; these read GD, NIST, and KHGNRSITS. G83 is a binding site for anthranilate. S95 lines the Mg(2+) pocket. Residue N114 coordinates anthranilate. R169 serves as a coordination point for anthranilate. Residues D228 and E229 each contribute to the Mg(2+) site.

It belongs to the anthranilate phosphoribosyltransferase family. As to quaternary structure, homodimer. Requires Mg(2+) as cofactor.

The catalysed reaction is N-(5-phospho-beta-D-ribosyl)anthranilate + diphosphate = 5-phospho-alpha-D-ribose 1-diphosphate + anthranilate. It participates in amino-acid biosynthesis; L-tryptophan biosynthesis; L-tryptophan from chorismate: step 2/5. Catalyzes the transfer of the phosphoribosyl group of 5-phosphorylribose-1-pyrophosphate (PRPP) to anthranilate to yield N-(5'-phosphoribosyl)-anthranilate (PRA). The chain is Anthranilate phosphoribosyltransferase from Solibacter usitatus (strain Ellin6076).